We begin with the raw amino-acid sequence, 691 residues long: DNA ligase (691 aa).

Positions 1–22 are disordered; that stretch reads MTTAEDVAGNPYISDPRTDFES. Residues 59 to 63, 107 to 108, and Glu137 each bind NAD(+); these read DRAYD and SI. Catalysis depends on Lys139, which acts as the N6-AMP-lysine intermediate. 4 residues coordinate NAD(+): Arg160, Glu196, Lys311, and Lys335. Zn(2+) contacts are provided by Cys426, Cys429, Cys442, and Cys448. Positions 608–691 constitute a BRCT domain; it reads TDGDALDGQT…EELLDDAGVL (84 aa). The segment at 637–667 is disordered; that stretch reads ERNDGSATSSVSGNTDYLVLGDNPGQRKQDD. Residues 641-651 are compositionally biased toward polar residues; that stretch reads GSATSSVSGNT.

It belongs to the NAD-dependent DNA ligase family. LigA subfamily. Mg(2+) is required as a cofactor. Mn(2+) serves as cofactor.

It carries out the reaction NAD(+) + (deoxyribonucleotide)n-3'-hydroxyl + 5'-phospho-(deoxyribonucleotide)m = (deoxyribonucleotide)n+m + AMP + beta-nicotinamide D-nucleotide.. DNA ligase that catalyzes the formation of phosphodiester linkages between 5'-phosphoryl and 3'-hydroxyl groups in double-stranded DNA using NAD as a coenzyme and as the energy source for the reaction. It is essential for DNA replication and repair of damaged DNA. The sequence is that of DNA ligase from Haloarcula marismortui (strain ATCC 43049 / DSM 3752 / JCM 8966 / VKM B-1809) (Halobacterium marismortui).